Here is a 127-residue protein sequence, read N- to C-terminus: Fumarate reductase subunit C (127 aa).

3 helical membrane-spanning segments follow: residues 30–50 (ATIL…GCLV), 67–87 (IVVV…QTFF), and 107–127 (IIVL…LVLV).

Belongs to the FrdC family. In terms of assembly, part of an enzyme complex containing four subunits: a flavoprotein (FrdA), an iron-sulfur protein (FrdB), and two hydrophobic anchor proteins (FrdC and FrdD).

The protein resides in the cell inner membrane. Functionally, anchors the catalytic components of the fumarate reductase complex to the cell membrane, binds quinones. The polypeptide is Fumarate reductase subunit C (Photobacterium profundum (strain SS9)).